Reading from the N-terminus, the 1155-residue chain is Probable translation initiation factor IF-2 (1155 aa).

The DOD-type homing endonuclease domain maps to 237–367 (FAGVMFGDGC…LSILLLRFEI (131 aa)). A tr-type G domain is found at 561–781 (TTETHNFIAN…VAGLAQKFLE (221 aa)). Residues 634–638 (DTPGH) and 688–691 (NKID) each bind GTP.

The protein belongs to the TRAFAC class translation factor GTPase superfamily. Classic translation factor GTPase family. IF-2 subfamily. In terms of processing, this protein undergoes a protein self splicing that involves a post-translational excision of the intervening region (intein) followed by peptide ligation.

Its function is as follows. Function in general translation initiation by promoting the binding of the formylmethionine-tRNA to ribosomes. Seems to function along with eIF-2. In Methanocaldococcus jannaschii (strain ATCC 43067 / DSM 2661 / JAL-1 / JCM 10045 / NBRC 100440) (Methanococcus jannaschii), this protein is Probable translation initiation factor IF-2 (infB).